A 209-amino-acid chain; its full sequence is High frequency lysogenization protein HflD homolog (209 aa).

This sequence belongs to the HflD family.

It is found in the cytoplasm. It localises to the cell inner membrane. This chain is High frequency lysogenization protein HflD homolog, found in Sodalis glossinidius (strain morsitans).